Here is a 185-residue protein sequence, read N- to C-terminus: Neuronal vesicle trafficking-associated protein 1 (185 aa).

Over 1 to 82 (MVKLGNNFSE…ITEGVSERFK (82 aa)) the chain is Cytoplasmic. Residues 83 to 103 (VTVLVLFALAFLTCVVFLVVY) form a helical; Signal-anchor for type II membrane protein membrane-spanning segment. Over 104–185 (KVYKYDHTCP…QETEAAEKSA (82 aa)) the chain is Lumenal.

The protein belongs to the NSG family.

Its subcellular location is the membrane. It localises to the golgi apparatus. The protein localises to the trans-Golgi network membrane. The protein resides in the endosome membrane. It is found in the cell projection. Its subcellular location is the dendrite. It localises to the early endosome membrane. The protein localises to the late endosome membrane. The protein resides in the lysosome lumen. It is found in the recycling endosome membrane. Its subcellular location is the cytoplasmic vesicle membrane. It localises to the golgi stack membrane. The protein localises to the endosome. The protein resides in the multivesicular body membrane. Functionally, plays a role in the recycling mechanism in neurons of multiple receptors and acts at the level of early endosomes to promote sorting of receptors toward a recycling pathway. The sequence is that of Neuronal vesicle trafficking-associated protein 1 from Gallus gallus (Chicken).